The chain runs to 311 residues: Formimidoylglutamase (311 aa).

The Mn(2+) site is built by His130, Asp155, His157, Asp159, Cys242, and Asp244.

It belongs to the arginase family. Mn(2+) is required as a cofactor.

The catalysed reaction is N-formimidoyl-L-glutamate + H2O = formamide + L-glutamate. It functions in the pathway amino-acid degradation; L-histidine degradation into L-glutamate; L-glutamate from N-formimidoyl-L-glutamate (hydrolase route): step 1/1. Its function is as follows. Catalyzes the conversion of N-formimidoyl-L-glutamate to L-glutamate and formamide. This is Formimidoylglutamase from Staphylococcus aureus (strain bovine RF122 / ET3-1).